The following is a 283-amino-acid chain: Thymidylate synthase (283 aa).

Residues R31 and 145-146 contribute to the dUMP site; that span reads RR. Catalysis depends on C165, which acts as the Nucleophile. DUMP is bound by residues 185-188, N196, and 226-228; these read RSAD and HIY. A (6R)-5,10-methylene-5,6,7,8-tetrahydrofolate-binding site is contributed by D188. S282 is a binding site for (6R)-5,10-methylene-5,6,7,8-tetrahydrofolate.

The protein belongs to the thymidylate synthase family. Bacterial-type ThyA subfamily. As to quaternary structure, homodimer.

Its subcellular location is the cytoplasm. The catalysed reaction is dUMP + (6R)-5,10-methylene-5,6,7,8-tetrahydrofolate = 7,8-dihydrofolate + dTMP. It participates in pyrimidine metabolism; dTTP biosynthesis. In terms of biological role, catalyzes the reductive methylation of 2'-deoxyuridine-5'-monophosphate (dUMP) to 2'-deoxythymidine-5'-monophosphate (dTMP) while utilizing 5,10-methylenetetrahydrofolate (mTHF) as the methyl donor and reductant in the reaction, yielding dihydrofolate (DHF) as a by-product. This enzymatic reaction provides an intracellular de novo source of dTMP, an essential precursor for DNA biosynthesis. This chain is Thymidylate synthase, found in Symbiobacterium thermophilum (strain DSM 24528 / JCM 14929 / IAM 14863 / T).